We begin with the raw amino-acid sequence, 375 residues long: MAKKTQKDFLNPKELIKHIDIKKYSQAVSMVEDFSNMAYSSRDLARASKIYNMMLADKGCAVVLCLAGSLISAGLKKIVVDLLENNMIDAIVSTGANIVDQDFFEALGYKHYKGDQHNADDNLLRDLHIDRIYDTYINEDELKVCDETVHKILNTLEPRPYSSREIIWEMGKWLEAKKKGKDSIIYTAYKKGVPIFVPAFADCSAGFGFVAHQTERPTSHVTLDGAKDFLELTKIKINAKETGLLMFAGGVPKNFVQDTVVAAEILGQDSPMHKYAVQVTVADERDGALSGSTLKEASSWGKVSTALEQMVYAECTLAVPLITAYAYHKKAWKSRKGFNYIKFLQNDDAKIAKMKKQECCCCESKKSASKKAKKK.

The protein belongs to the deoxyhypusine synthase family.

This is Deoxyhypusine synthase-like protein from Elusimicrobium minutum (strain Pei191).